The following is a 384-amino-acid chain: Lipid-A-disaccharide synthase 1 (384 aa).

Belongs to the LpxB family.

It carries out the reaction a lipid X + a UDP-2-N,3-O-bis[(3R)-3-hydroxyacyl]-alpha-D-glucosamine = a lipid A disaccharide + UDP + H(+). It participates in bacterial outer membrane biogenesis; LPS lipid A biosynthesis. Its function is as follows. Condensation of UDP-2,3-diacylglucosamine and 2,3-diacylglucosamine-1-phosphate to form lipid A disaccharide, a precursor of lipid A, a phosphorylated glycolipid that anchors the lipopolysaccharide to the outer membrane of the cell. This chain is Lipid-A-disaccharide synthase 1, found in Legionella pneumophila (strain Paris).